We begin with the raw amino-acid sequence, 120 residues long: uncharacterized protein (120 aa).

2 consecutive transmembrane segments (helical) span residues 26-46 (PSTSLTIMLSVIAIRILPAGM) and 57-77 (LLFASFLLLSSFHYPITLTLV).

The protein localises to the membrane. This is an uncharacterized protein from Saccharomyces cerevisiae (strain ATCC 204508 / S288c) (Baker's yeast).